Consider the following 670-residue polypeptide: DNA ligase (670 aa).

NAD(+)-binding positions include 33-37, 82-83, and glutamate 114; these read DVEYD and SL. Catalysis depends on lysine 116, which acts as the N6-AMP-lysine intermediate. NAD(+) is bound by residues arginine 137, glutamate 174, lysine 291, and lysine 315. Zn(2+) is bound by residues cysteine 409, cysteine 412, cysteine 427, and cysteine 433. The BRCT domain maps to 593–670; that stretch reads DQELPLEGKV…TEEDLIALIS (78 aa).

It belongs to the NAD-dependent DNA ligase family. LigA subfamily. The cofactor is Mg(2+). It depends on Mn(2+) as a cofactor.

The enzyme catalyses NAD(+) + (deoxyribonucleotide)n-3'-hydroxyl + 5'-phospho-(deoxyribonucleotide)m = (deoxyribonucleotide)n+m + AMP + beta-nicotinamide D-nucleotide.. Functionally, DNA ligase that catalyzes the formation of phosphodiester linkages between 5'-phosphoryl and 3'-hydroxyl groups in double-stranded DNA using NAD as a coenzyme and as the energy source for the reaction. It is essential for DNA replication and repair of damaged DNA. The chain is DNA ligase from Vibrio atlanticus (strain LGP32) (Vibrio splendidus (strain Mel32)).